The sequence spans 673 residues: G-protein-signaling modulator 1 (673 aa).

The segment at 1 to 507 is mediates association with membranes; the sequence is MASPAPPAAE…DLLSKFQSSR (507 aa). TPR repeat units follow at residues 28-61, 66-99, 106-139, 146-178, 180-199, 206-239, 246-279, 286-319, and 326-359; these read CLEL…GTED, SAIY…ARTI, AKAS…AQEQ, ARAL…PPDV, ETLH…VKEL, GRAY…AKEF, RRAY…SRQI, AQAC…AQEL, and GRAC…SQEI. The interval 361–485 is interaction with STK11/LKB1; it reads DRNGELTARM…VRVQVPRTGI (125 aa). The residue at position 410 (Ser-410) is a Phosphoserine. Arg-418 is modified (omega-N-methylarginine). Residues 420–439 are compositionally biased toward basic and acidic residues; that stretch reads PLDREQNGETHHTGDWRGPS. The tract at residues 420–477 is disordered; the sequence is PLDREQNGETHHTGDWRGPSRDSLPLPMRSRKYQEGPDAIERRPREGSHSPLDSADVR. Phosphoserine occurs at positions 442, 467, 469, 490, and 491. The segment covering 451 to 467 has biased composition (basic and acidic residues); that stretch reads KYQEGPDAIERRPREGS. A GoLoco 1 domain is found at 493-515; it reads EECFFDLLSKFQSSRMDDQRCPL. The disordered stretch occupies residues 510–544; the sequence is DQRCPLEEGQAGAAEATAAPTLEERAAQPSVTASP. Low complexity predominate over residues 516–530; that stretch reads EEGQAGAAEATAAPT. Phosphoserine occurs at positions 543 and 567. GoLoco domains follow at residues 546–568, 594–616, and 628–650; these read TEEF…RASV, GDEF…RCPP, and DEDF…RVDL. 2 disordered regions span residues 609–628 and 645–673; these read IDDQ…TMPD and EQRV…PGAS. Ser-653 is subject to Phosphoserine.

This sequence belongs to the GPSM family. Interacts with INSC/inscuteable and FRMPD1. Interacts with GNAI1, GNAI2 and GNAI3 preferentially in their GDP-bound state. May also interact with GNAO1. Interacts with STK11/LKB1 and MACF1. Post-translationally, phosphorylation regulates interaction with G(i/o) alpha. As to expression, isoform 4 is specifically expressed in brain by neurons and also detected in testis, liver, kidney, heart and pancreas (at protein level). Highly expressed in cerebellum and subventricular zone-olfactory bulb system. Isoform 2 and isoform 3 are specifically expressed in heart and are also detected in brain.

The protein resides in the endoplasmic reticulum membrane. Its subcellular location is the golgi apparatus membrane. The protein localises to the cell membrane. It is found in the cytoplasm. It localises to the cytosol. Functionally, guanine nucleotide dissociation inhibitor (GDI) which functions as a receptor-independent activator of heterotrimeric G-protein signaling. Keeps G(i/o) alpha subunit in its GDP-bound form thus uncoupling heterotrimeric G-proteins signaling from G protein-coupled receptors. Controls spindle orientation and asymmetric cell fate of cerebral cortical progenitors. May also be involved in macroautophagy in intestinal cells. May play a role in drug addiction. The polypeptide is G-protein-signaling modulator 1 (Gpsm1) (Rattus norvegicus (Rat)).